The chain runs to 200 residues: Integrin beta-1-binding protein 1 (200 aa).

The span at 1–10 (MFRKGKKRHS) shows a compositional bias: basic residues. A disordered region spans residues 1–55 (MFRKGKKRHSSSSSQSSEISTKSKSVDSSLGGLSRSSTVASLDTDSTKSSGQSNS). Residues 6–7 (KK) carry the Nuclear localization signal motif. Residues 11–29 (SSSSQSSEISTKSKSVDSS) are compositionally biased toward low complexity. The span at 34–55 (SRSSTVASLDTDSTKSSGQSNS) shows a compositional bias: polar residues. A Phosphothreonine; by CaMK2 modification is found at threonine 38. At serine 41 the chain carries Phosphoserine. Residues 58–200 (DTCAEFRIKY…FDSVLTSDKS (143 aa)) form the PID domain. The interval 136-139 (YLII) is interaction with KRIT1. Positions 139 to 141 (IRM) are interaction with ITGB1.

In terms of assembly, found in a complex, at least composed of ITGB1BP1, KRIT1 and RAP1A. Interacts (via C-terminal region) with ITGB1 (via C-terminal cytoplasmic tail); the interaction prevents talin TLN1 binding to ITGB1 and KRIT1 and ITGB1 compete for the same binding site. Interacts with KRIT1 (via N-terminal NPXY motif); the interaction induces the opening conformation of KRIT1 and KRIT1 and ITGB1 compete for the same binding site. Isoform 2 does not interact with ITGB1. Interacts with CDC42 (GTP- or GDP-bound form); the interaction is increased with the CDC42-membrane bound forms and prevents both CDC42 activation and cell spreading. Interacts (via C-terminal domain region) with NME2. Interacts with FERMT2 and RAC1. Interacts (via N-terminus and PTB domain) with ROCK1. Phosphorylation at Thr-38 seems to enhance integrin alpha5beta1-mediated cell adhesion. The degree of phosphorylation is regulated by integrin-dependent cell-matrix interaction. As to expression, expressed in the brain.

The protein localises to the nucleus. It is found in the cytoplasm. It localises to the cytoskeleton. The protein resides in the cell membrane. Its subcellular location is the cell projection. The protein localises to the lamellipodium. It is found in the ruffle. Its function is as follows. Key regulator of the integrin-mediated cell-matrix interaction signaling by binding to the ITGB1 cytoplasmic tail and preventing the activation of integrin alpha-5/beta-1 (heterodimer of ITGA5 and ITGB1) by talin or FERMT1. Plays a role in cell proliferation, differentiation, spreading, adhesion and migration in the context of mineralization and bone development and angiogenesis. Stimulates cellular proliferation in a fibronectin-dependent manner. Involved in the regulation of beta-1 integrin-containing focal adhesion (FA) site dynamics by controlling its assembly rate during cell adhesion; inhibits beta-1 integrin clustering within FA by directly competing with talin TLN1, and hence stimulates osteoblast spreading and migration in a fibronectin- and/or collagen-dependent manner. Acts as a guanine nucleotide dissociation inhibitor (GDI) by regulating Rho family GTPases during integrin-mediated cell matrix adhesion; reduces the level of active GTP-bound form of both CDC42 and RAC1 GTPases upon cell adhesion to fibronectin. Stimulates the release of active CDC42 from the membranes to maintain it in an inactive cytoplasmic pool. Participates in the translocation of the Rho-associated protein kinase ROCK1 to membrane ruffles at cell leading edges of the cell membrane, leading to an increase of myoblast cell migration on laminin. Plays a role in bone mineralization at a late stage of osteoblast differentiation; modulates the dynamic formation of focal adhesions into fibrillar adhesions, which are adhesive structures responsible for fibronectin deposition and fibrillogenesis. Plays a role in blood vessel development; acts as a negative regulator of angiogenesis by attenuating endothelial cell proliferation and migration, lumen formation and sprouting angiogenesis by promoting AKT phosphorylation and inhibiting ERK1/2 phosphorylation through activation of the Notch signaling pathway. Promotes transcriptional activity of the MYC promoter. This is Integrin beta-1-binding protein 1 (Itgb1bp1) from Mus musculus (Mouse).